The primary structure comprises 326 residues: MASSYRINCSTLLHLLMFLSSLLTSSANLSFNFYASSCSVAEFLVRNTVRSATSSDPTIPGKLLRLFFHDCFVQGCDASVLIQGNSTEKSDPGNASLGGFSVIDTAKNAIENLCPATVSCADIVALAARDAVEAAGGPVVEIPTGRRDGKESMAANVRPNIIDTDFTLDQMIDAFSSKGLSIQDLVVLSGAHTIGASHCNAFNGRFQRDSKGNFEVIDASLDNSYAETLMNKCSSSESSSLTVSNDPETSAVFDNQYYRNLETHKGLFQTDSALMEDNRTRTMVEELASDEESFFQRWSESFVKLSMVGVRVGEDGEIRRSCSSVN.

The first 27 residues, 1 to 27, serve as a signal peptide directing secretion; it reads MASSYRINCSTLLHLLMFLSSLLTSSA. Asparagine 28 is a glycosylation site (N-linked (GlcNAc...) asparagine). 4 disulfides stabilise this stretch: cysteine 38–cysteine 114, cysteine 71–cysteine 76, cysteine 120–cysteine 322, and cysteine 199–cysteine 233. The active-site Proton acceptor is the histidine 69. Ca(2+) contacts are provided by aspartate 70, valine 73, glycine 75, aspartate 77, and serine 79. Residue asparagine 85 is glycosylated (N-linked (GlcNAc...) asparagine). Histidine 192 provides a ligand contact to heme b. Threonine 193 lines the Ca(2+) pocket. Ca(2+) contacts are provided by aspartate 246, threonine 249, and aspartate 254. N-linked (GlcNAc...) asparagine glycosylation is present at asparagine 278.

It belongs to the peroxidase family. Classical plant (class III) peroxidase subfamily. Requires heme b as cofactor. It depends on Ca(2+) as a cofactor.

It is found in the secreted. The catalysed reaction is 2 a phenolic donor + H2O2 = 2 a phenolic radical donor + 2 H2O. Its function is as follows. Removal of H(2)O(2), oxidation of toxic reductants, biosynthesis and degradation of lignin, suberization, auxin catabolism, response to environmental stresses such as wounding, pathogen attack and oxidative stress. These functions might be dependent on each isozyme/isoform in each plant tissue. In Arabidopsis thaliana (Mouse-ear cress), this protein is Peroxidase 46 (PER46).